The sequence spans 62 residues: UPF0291 protein CLM_2971 (62 aa).

The protein belongs to the UPF0291 family.

It localises to the cytoplasm. In Clostridium botulinum (strain Kyoto / Type A2), this protein is UPF0291 protein CLM_2971.